A 94-amino-acid chain; its full sequence is Probable Fe(2+)-trafficking protein (94 aa).

Belongs to the Fe(2+)-trafficking protein family.

Could be a mediator in iron transactions between iron acquisition and iron-requiring processes, such as synthesis and/or repair of Fe-S clusters in biosynthetic enzymes. In Marinomonas sp. (strain MWYL1), this protein is Probable Fe(2+)-trafficking protein.